The chain runs to 346 residues: Ketol-acid reductoisomerase (NADP(+)) (346 aa).

Positions 1–189 constitute a KARI N-terminal Rossmann domain; it reads MQVYYDRDAD…GGGRSGIIET (189 aa). NADP(+) is bound by residues 24–27, Arg48, Ser51, Thr53, and 83–86; these read YGSQ and DEHQ. The active site involves His108. Gly134 lines the NADP(+) pocket. One can recognise a KARI C-terminal knotted domain in the interval 190–335; that stretch reads TFKEECETDL…EKLRAMMPWI (146 aa). Mg(2+) is bound by residues Asp198, Glu202, Glu234, and Glu238. Substrate is bound at residue Ser259.

Belongs to the ketol-acid reductoisomerase family. Requires Mg(2+) as cofactor.

The enzyme catalyses (2R)-2,3-dihydroxy-3-methylbutanoate + NADP(+) = (2S)-2-acetolactate + NADPH + H(+). It catalyses the reaction (2R,3R)-2,3-dihydroxy-3-methylpentanoate + NADP(+) = (S)-2-ethyl-2-hydroxy-3-oxobutanoate + NADPH + H(+). It functions in the pathway amino-acid biosynthesis; L-isoleucine biosynthesis; L-isoleucine from 2-oxobutanoate: step 2/4. Its pathway is amino-acid biosynthesis; L-valine biosynthesis; L-valine from pyruvate: step 2/4. In terms of biological role, involved in the biosynthesis of branched-chain amino acids (BCAA). Catalyzes an alkyl-migration followed by a ketol-acid reduction of (S)-2-acetolactate (S2AL) to yield (R)-2,3-dihydroxy-isovalerate. In the isomerase reaction, S2AL is rearranged via a Mg-dependent methyl migration to produce 3-hydroxy-3-methyl-2-ketobutyrate (HMKB). In the reductase reaction, this 2-ketoacid undergoes a metal-dependent reduction by NADPH to yield (R)-2,3-dihydroxy-isovalerate. This Sphingopyxis alaskensis (strain DSM 13593 / LMG 18877 / RB2256) (Sphingomonas alaskensis) protein is Ketol-acid reductoisomerase (NADP(+)).